Here is a 231-residue protein sequence, read N- to C-terminus: 2-C-methyl-D-erythritol 2,4-cyclodiphosphate synthase, chloroplastic (231 aa).

Residues 1–52 (MATSSTQLLLSSSSLFHSQITKKPFLLPATKIGVWRPKKSLSLSCRPSASVS) constitute a chloroplast transit peptide. Residues D82 and H84 each coordinate a divalent metal cation. Substrate is bound by residues 82–84 (DLH), 108–109 (HS), 112–120 (DVLLHCVVD), 130–132 (DIG), 135–139 (FPDSD), D139, 174–180 (LQRPKIS), and 205–209 (AKTHE). Position 116 (H116) interacts with a divalent metal cation.

This sequence belongs to the IspF family. As to quaternary structure, homotrimer. A divalent metal cation serves as cofactor.

The protein localises to the plastid. It localises to the chloroplast stroma. The enzyme catalyses 4-CDP-2-C-methyl-D-erythritol 2-phosphate = 2-C-methyl-D-erythritol 2,4-cyclic diphosphate + CMP. It functions in the pathway isoprenoid biosynthesis; isopentenyl diphosphate biosynthesis via DXP pathway; isopentenyl diphosphate from 1-deoxy-D-xylulose 5-phosphate: step 4/6. Enzyme of the plastid non-mevalonate pathway for isoprenoid biosynthesis that converts 4-diphosphocytidyl-2C-methyl-D-erythritol 2-phosphate into 2C-methyl-D-erythritol 2,4-cyclodiphosphate and CMP. Is essential for chloroplast development. This is 2-C-methyl-D-erythritol 2,4-cyclodiphosphate synthase, chloroplastic from Arabidopsis thaliana (Mouse-ear cress).